The sequence spans 400 residues: Dual specificity mitogen-activated protein kinase kinase 2 (400 aa).

Residue M1 is modified to N-acetylmethionine. The residue at position 23 (S23) is a Phosphoserine. Residues 72–369 (FERISELGAG…LKMLMSHTFI (298 aa)) form the Protein kinase domain. ATP contacts are provided by residues 78-86 (LGAGNGGVV) and K101. The active-site Proton acceptor is D194. Position 222 is a phosphoserine; by RAF (S222). A phosphoserine mark is found at S226, S293, S295, and S306. The disordered stretch occupies residues 288–309 (EGEPHSISPRPRPPGRPISGHG). T394 and T396 each carry phosphothreonine.

The protein belongs to the protein kinase superfamily. STE Ser/Thr protein kinase family. MAP kinase kinase subfamily. In terms of assembly, interacts with MORG1. Interacts with SGK1. Interacts with KSR1. Interacts with KSR1 and BRAF; the interaction with KSR1 mediates KSR1-BRAF dimerization. Interacts with GLS. Mg(2+) serves as cofactor. MAPKK is itself dependent on Ser/Thr phosphorylation for activity catalyzed by MAP kinase kinase kinases (RAF or MEKK1).

Its subcellular location is the cytoplasm. The protein resides in the membrane. It carries out the reaction L-seryl-[protein] + ATP = O-phospho-L-seryl-[protein] + ADP + H(+). The enzyme catalyses L-threonyl-[protein] + ATP = O-phospho-L-threonyl-[protein] + ADP + H(+). The catalysed reaction is L-tyrosyl-[protein] + ATP = O-phospho-L-tyrosyl-[protein] + ADP + H(+). Catalyzes the concomitant phosphorylation of a threonine and a tyrosine residue in a Thr-Glu-Tyr sequence located in MAP kinases. Activates the ERK1 and ERK2 MAP kinases. Activates BRAF in a KSR1 or KSR2-dependent manner; by binding to KSR1 or KSR2 releases the inhibitory intramolecular interaction between KSR1 or KSR2 protein kinase and N-terminal domains which promotes KSR1 or KSR2-BRAF dimerization and BRAF activation. The sequence is that of Dual specificity mitogen-activated protein kinase kinase 2 (MAP2K2) from Canis lupus familiaris (Dog).